A 322-amino-acid polypeptide reads, in one-letter code: 4-hydroxythreonine-4-phosphate dehydrogenase (322 aa).

Substrate-binding residues include His-126 and Thr-127. A divalent metal cation contacts are provided by His-160, His-205, and His-260. Substrate-binding residues include Lys-268, Asn-277, and Arg-286.

The protein belongs to the PdxA family. Homodimer. Zn(2+) is required as a cofactor. The cofactor is Mg(2+). Co(2+) serves as cofactor.

The protein resides in the cytoplasm. The enzyme catalyses 4-(phosphooxy)-L-threonine + NAD(+) = 3-amino-2-oxopropyl phosphate + CO2 + NADH. It functions in the pathway cofactor biosynthesis; pyridoxine 5'-phosphate biosynthesis; pyridoxine 5'-phosphate from D-erythrose 4-phosphate: step 4/5. Catalyzes the NAD(P)-dependent oxidation of 4-(phosphooxy)-L-threonine (HTP) into 2-amino-3-oxo-4-(phosphooxy)butyric acid which spontaneously decarboxylates to form 3-amino-2-oxopropyl phosphate (AHAP). This chain is 4-hydroxythreonine-4-phosphate dehydrogenase, found in Paracoccus denitrificans (strain Pd 1222).